We begin with the raw amino-acid sequence, 239 residues long: 2,3,4,5-tetrahydropyridine-2,6-dicarboxylate N-acetyltransferase (239 aa).

Belongs to the transferase hexapeptide repeat family. DapH subfamily.

The enzyme catalyses (S)-2,3,4,5-tetrahydrodipicolinate + acetyl-CoA + H2O = L-2-acetamido-6-oxoheptanedioate + CoA. It participates in amino-acid biosynthesis; L-lysine biosynthesis via DAP pathway; LL-2,6-diaminopimelate from (S)-tetrahydrodipicolinate (acetylase route): step 1/3. Its function is as follows. Catalyzes the transfer of an acetyl group from acetyl-CoA to tetrahydrodipicolinate. This Staphylococcus carnosus (strain TM300) protein is 2,3,4,5-tetrahydropyridine-2,6-dicarboxylate N-acetyltransferase.